The chain runs to 142 residues: MAP3K7 C-terminal-like protein (142 aa).

In terms of tissue distribution, ubiquitous.

This is MAP3K7 C-terminal-like protein (Map3k7cl) from Mus musculus (Mouse).